A 1730-amino-acid chain; its full sequence is Myosin-7 (1730 aa).

One can recognise a Myosin N-terminal SH3-like domain in the interval 8–56 (TVGSHVWVEDPDDAWIDGEVEEVNSEEITVNCSGKTVVAKLNNVYPKDP). Residues 61 to 731 (LGVDDMTKLA…QMAEMDAHRA (671 aa)) enclose the Myosin motor domain. Residues 155 to 162 (GESGAGKT) and 208 to 216 (NNNSSRFGK) contribute to the ATP site. Actin-binding regions lie at residues 494-528 (LIEK…YQTF), 530-553 (NHKR…AGDV), 588-612 (FPPL…KQQL), and 612-634 (LQSL…KPNN). 4 consecutive IQ domains span residues 757–786 (LQAA…EAAS), 782–811 (REAA…SACS), 831–850 (RRAT…HQRY), and 853–882 (TKKA…AAKE). Residues 883 to 1224 (TGALQDAKTK…VSDMETAEQI (342 aa)) are a coiled coil. Residues 1327–1678 (DRIVPVFGSA…ISNLKLLLTN (352 aa)) enclose the Dilute domain. 2 disordered regions span residues 1367–1387 (QSST…FGRM) and 1456–1520 (DSSV…SSEE). A compositionally biased stretch (low complexity) spans 1456–1465 (DSSVVNSPSK). The segment covering 1475 to 1508 (SSEENSPKKSSEENSPKESSGDKSPQKLSDDNSP) has biased composition (basic and acidic residues).

The protein belongs to the TRAFAC class myosin-kinesin ATPase superfamily. Myosin family. Plant myosin class XI subfamily. In terms of assembly, homodimer.

In terms of biological role, myosin heavy chain that is required for the cell cycle-regulated transport of various organelles and proteins for their segregation. Functions by binding with its tail domain to receptor proteins on organelles and exerting force with its N-terminal motor domain against actin filaments, thereby transporting its cargo along polarized actin cables. The sequence is that of Myosin-7 (XI-A) from Arabidopsis thaliana (Mouse-ear cress).